A 418-amino-acid chain; its full sequence is Histidine--tRNA ligase (418 aa).

This sequence belongs to the class-II aminoacyl-tRNA synthetase family. As to quaternary structure, homodimer.

It localises to the cytoplasm. The enzyme catalyses tRNA(His) + L-histidine + ATP = L-histidyl-tRNA(His) + AMP + diphosphate + H(+). The protein is Histidine--tRNA ligase of Dehalococcoides mccartyi (strain ATCC BAA-2266 / KCTC 15142 / 195) (Dehalococcoides ethenogenes (strain 195)).